Here is a 1045-residue protein sequence, read N- to C-terminus: Bifunctional glutamine synthetase adenylyltransferase/adenylyl-removing enzyme (1045 aa).

An adenylyl removase region spans residues 1 to 527 (MSGPLRSERK…LHSQLFYRPL (527 aa)). The interval 533–1045 (NLSADAIRLS…GVDSMEQREF (513 aa)) is adenylyl transferase.

This sequence belongs to the GlnE family. Mg(2+) is required as a cofactor.

The catalysed reaction is [glutamine synthetase]-O(4)-(5'-adenylyl)-L-tyrosine + phosphate = [glutamine synthetase]-L-tyrosine + ADP. It carries out the reaction [glutamine synthetase]-L-tyrosine + ATP = [glutamine synthetase]-O(4)-(5'-adenylyl)-L-tyrosine + diphosphate. Its function is as follows. Involved in the regulation of glutamine synthetase GlnA, a key enzyme in the process to assimilate ammonia. When cellular nitrogen levels are high, the C-terminal adenylyl transferase (AT) inactivates GlnA by covalent transfer of an adenylyl group from ATP to specific tyrosine residue of GlnA, thus reducing its activity. Conversely, when nitrogen levels are low, the N-terminal adenylyl removase (AR) activates GlnA by removing the adenylyl group by phosphorolysis, increasing its activity. The regulatory region of GlnE binds the signal transduction protein PII (GlnB) which indicates the nitrogen status of the cell. The chain is Bifunctional glutamine synthetase adenylyltransferase/adenylyl-removing enzyme from Corynebacterium glutamicum (strain ATCC 13032 / DSM 20300 / JCM 1318 / BCRC 11384 / CCUG 27702 / LMG 3730 / NBRC 12168 / NCIMB 10025 / NRRL B-2784 / 534).